The primary structure comprises 1319 residues: Uromodulin-like 1 (1319 aa).

The first 22 residues, methionine 1–alanine 22, serve as a signal peptide directing secretion. Over serine 23–tyrosine 1273 the chain is Extracellular. Positions serine 34–leucine 107 constitute an EMI domain. 3 disulfide bridges follow: cysteine 38-cysteine 95, cysteine 62-cysteine 71, and cysteine 94-cysteine 105. N-linked (GlcNAc...) asparagine glycosylation is present at asparagine 90. A glycan (N-linked (GlcNAc...) asparagine) is linked at asparagine 110. Residues phenylalanine 115–threonine 159 enclose the WAP domain. N-linked (GlcNAc...) asparagine glycans are attached at residues asparagine 172, asparagine 193, and asparagine 243. Residues aspartate 265–proline 306 enclose the EGF-like 1; calcium-binding domain. 2 disulfides stabilise this stretch: cysteine 269–cysteine 283 and cysteine 277–cysteine 292. Residues proline 307 to glutamine 391 enclose the Fibronectin type-III 1 domain. N-linked (GlcNAc...) asparagine glycosylation is present at asparagine 315. Residues aspartate 389–glutamate 503 form the SEA 1 domain. The EGF-like 2; calcium-binding domain occupies aspartate 500–glutamate 545. Cystine bridges form between cysteine 504/cysteine 518, cysteine 512/cysteine 527, and cysteine 529/cysteine 544. Disordered regions lie at residues threonine 569–aspartate 649 and histidine 664–proline 703. Residues threonine 619 to threonine 632 are compositionally biased toward low complexity. Over residues threonine 638–threonine 647 the composition is skewed to basic and acidic residues. The segment covering histidine 664–leucine 678 has biased composition (polar residues). In terms of domain architecture, Fibronectin type-III 2 spans proline 709–lysine 795. Residues asparagine 717 and asparagine 757 are each glycosylated (N-linked (GlcNAc...) asparagine). In terms of domain architecture, SEA 2 spans valine 792–glutamate 904. The EGF-like 3; calcium-binding domain occupies aspartate 901–aspartate 945. Cystine bridges form between cysteine 905–cysteine 917, cysteine 912–cysteine 926, and cysteine 928–cysteine 944. A disordered region spans residues tyrosine 939–glycine 966. Residues glycine 950 to serine 961 show a composition bias toward polar residues. N-linked (GlcNAc...) asparagine glycosylation occurs at asparagine 951. A ZP domain is found at serine 995 to phenylalanine 1238. Residues cysteine 1160 and cysteine 1218 are joined by a disulfide bond. Residues isoleucine 1274–leucine 1294 form a helical membrane-spanning segment. The Cytoplasmic portion of the chain corresponds to arginine 1295–glutamine 1319.

The protein localises to the cell membrane. This Mus musculus (Mouse) protein is Uromodulin-like 1 (Umodl1).